The following is a 240-amino-acid chain: Pyridoxine 5'-phosphate synthase (240 aa).

Asn-7 serves as a coordination point for 3-amino-2-oxopropyl phosphate. Residue 9-10 participates in 1-deoxy-D-xylulose 5-phosphate binding; that stretch reads DH. Arg-18 is a 3-amino-2-oxopropyl phosphate binding site. His-43 serves as the catalytic Proton acceptor. 1-deoxy-D-xylulose 5-phosphate-binding residues include Arg-45 and His-50. Residue Glu-70 is the Proton acceptor of the active site. Thr-100 lines the 1-deoxy-D-xylulose 5-phosphate pocket. His-191 (proton donor) is an active-site residue. Residues Gly-192 and 213 to 214 each bind 3-amino-2-oxopropyl phosphate; that span reads GH.

Belongs to the PNP synthase family. In terms of assembly, homooctamer; tetramer of dimers.

It is found in the cytoplasm. It catalyses the reaction 3-amino-2-oxopropyl phosphate + 1-deoxy-D-xylulose 5-phosphate = pyridoxine 5'-phosphate + phosphate + 2 H2O + H(+). Its pathway is cofactor biosynthesis; pyridoxine 5'-phosphate biosynthesis; pyridoxine 5'-phosphate from D-erythrose 4-phosphate: step 5/5. Catalyzes the complicated ring closure reaction between the two acyclic compounds 1-deoxy-D-xylulose-5-phosphate (DXP) and 3-amino-2-oxopropyl phosphate (1-amino-acetone-3-phosphate or AAP) to form pyridoxine 5'-phosphate (PNP) and inorganic phosphate. This is Pyridoxine 5'-phosphate synthase from Microcystis aeruginosa (strain NIES-843 / IAM M-2473).